Here is a 260-residue protein sequence, read N- to C-terminus: Phosphonates import ATP-binding protein PhnC 2 (260 aa).

The 242-residue stretch at 4–245 (IQINKATKTY…KNTLRTIYQR (242 aa)) folds into the ABC transporter domain. 37 to 44 (GPSGAGKS) is a binding site for ATP.

This sequence belongs to the ABC transporter superfamily. Phosphonates importer (TC 3.A.1.9.1) family. The complex is composed of two ATP-binding proteins (PhnC), two transmembrane proteins (PhnE) and a solute-binding protein (PhnD).

Its subcellular location is the cell inner membrane. The catalysed reaction is phosphonate(out) + ATP + H2O = phosphonate(in) + ADP + phosphate + H(+). Its function is as follows. Part of the ABC transporter complex PhnCDE involved in phosphonates import. Responsible for energy coupling to the transport system. The protein is Phosphonates import ATP-binding protein PhnC 2 of Trichodesmium erythraeum (strain IMS101).